A 405-amino-acid chain; its full sequence is L-carnitine CoA-transferase (405 aa).

CoA contacts are provided by Lys97 and Arg104. The active-site Nucleophile is Asp169.

It belongs to the CoA-transferase III family. CaiB subfamily. As to quaternary structure, homodimer.

It localises to the cytoplasm. The enzyme catalyses crotonobetainyl-CoA + (R)-carnitine = crotonobetaine + (R)-carnitinyl-CoA. It catalyses the reaction 4-(trimethylamino)butanoyl-CoA + (R)-carnitine = (R)-carnitinyl-CoA + 4-(trimethylamino)butanoate. It functions in the pathway amine and polyamine metabolism; carnitine metabolism. Catalyzes the reversible transfer of the CoA moiety from gamma-butyrobetainyl-CoA to L-carnitine to generate L-carnitinyl-CoA and gamma-butyrobetaine. Is also able to catalyze the reversible transfer of the CoA moiety from gamma-butyrobetainyl-CoA or L-carnitinyl-CoA to crotonobetaine to generate crotonobetainyl-CoA. The protein is L-carnitine CoA-transferase of Escherichia coli O6:K15:H31 (strain 536 / UPEC).